The sequence spans 1914 residues: Zinc finger protein Rlf (1914 aa).

Ser-41 carries the post-translational modification Phosphoserine. Positions 521 to 540 (KQYRRRDLTDQHKEKRDKKP) are enriched in basic and acidic residues. The disordered stretch occupies residues 521–541 (KQYRRRDLTDQHKEKRDKKPI). Residues 582–604 (YTCPVCIKKFKRKEMFVPHVMEH) form a C2H2-type 1 zinc finger. Lys-622 participates in a covalent cross-link: Glycyl lysine isopeptide (Lys-Gly) (interchain with G-Cter in SUMO2). A phosphoserine mark is found at Ser-632 and Ser-634. C2H2-type zinc fingers lie at residues 671-696 (YPCPGTDCSRVFKQFKYLSVHLKAEH), 714-736 (EKCTYCRRHFMSAFHLREHEQVH), 742-766 (YMCVSIDCYARFGSVNELLNHKQKH), 771-795 (YKCELNGCNIVFSDLGQLYHHEAQH), and 801-825 (YTCNFLGCKKFYYSKIEYQNHLSMH). A Glycyl lysine isopeptide (Lys-Gly) (interchain with G-Cter in SUMO2) cross-link involves residue Lys-839. The disordered stretch occupies residues 882–907 (TETAENLKENSDSNSSDQLSHSSSAS). Over residues 893–907 (DSNSSDQLSHSSSAS) the composition is skewed to low complexity. A C2H2-type 7 zinc finger spans residues 954-979 (FTCGFDGCGSTYKNARGMQKHLRKVH). Positions 993-1028 (LFPSLGNEHNQTTEKLDAEPKPCSDTNSDSPDEGLD) are disordered. Over residues 1003–1014 (QTTEKLDAEPKP) the composition is skewed to basic and acidic residues. C2H2-type zinc fingers lie at residues 1127 to 1152 (FFCELQGCKYEFVTREALLMHYLKKH) and 1172 to 1195 (FQCHICQRSFTRKTHLRIHYKNKH). The disordered stretch occupies residues 1231–1290 (LGGDPSSNSEKPHCHPKKDECSSETDLESSCEETESKTSDISSPIGSHREEQEGREGRGS). The segment covering 1240 to 1251 (EKPHCHPKKDEC) has biased composition (basic and acidic residues). Residues 1252 to 1263 (SSETDLESSCEE) are compositionally biased toward acidic residues. Residues 1277 to 1289 (SHREEQEGREGRG) show a composition bias toward basic and acidic residues. 5 consecutive C2H2-type zinc fingers follow at residues 1310–1335 (FHCIHKTCNSSFTNLKGLIRHYRTVH), 1362–1387 (FACKYKECNKRFLCSKALAKHCSDSH), 1407–1432 (FSCNQPQCPAVFYTFNKLKHHLMEQH), 1444–1469 (IHCDLNGCGQIFTHRSNYSQHVYYRH), and 1549–1574 (YPCMVQGCLSVVKLESSIVRHYKRTH). Lys-1423 is covalently cross-linked (Glycyl lysine isopeptide (Lys-Gly) (interchain with G-Cter in SUMO2)). Residues Lys-1599 and Lys-1611 each participate in a glycyl lysine isopeptide (Lys-Gly) (interchain with G-Cter in SUMO2) cross-link. Residues 1620-1654 (SERTEHSHSPGDSSAPIQNTDCCHSSERDGGQKGC) are disordered. A compositionally biased stretch (polar residues) spans 1629 to 1642 (PGDSSAPIQNTDCC). Lys-1696 is covalently cross-linked (Glycyl lysine isopeptide (Lys-Gly) (interchain with G-Cter in SUMO2)). Positions 1725 to 1757 (ESETRQHSSGQENTVKNPTHVPKENFRKHSQPR) are disordered. Positions 1731–1741 (HSSGQENTVKN) are enriched in polar residues. Lys-1762 is covalently cross-linked (Glycyl lysine isopeptide (Lys-Gly) (interchain with G-Cter in SUMO2)). A disordered region spans residues 1783-1807 (KEDDFDDWEPSEHLTLSNSSQSSND). Positions 1796–1807 (LTLSNSSQSSND) are enriched in polar residues.

The protein belongs to the krueppel C2H2-type zinc-finger protein family. In terms of assembly, interacts with RIT1 and RIT2. As to expression, widely expressed in fetal and adult tissues.

Its subcellular location is the nucleus. Functionally, may be involved in transcriptional regulation. The protein is Zinc finger protein Rlf (RLF) of Homo sapiens (Human).